The sequence spans 291 residues: Undecaprenyl-diphosphatase (291 aa).

The next 8 helical transmembrane spans lie at 1 to 21 (MFII…LTEF), 48 to 68 (SAFT…AWVF), 102 to 122 (LHVL…DDFI), 126 to 146 (LFSV…MIIA), 162 to 182 (INYF…WPGF), 203 to 223 (SDFT…LSLL), 236 to 256 (FYIL…KTFL), and 267 to 287 (FAIY…GFGI).

It belongs to the UppP family.

It localises to the cell membrane. It carries out the reaction di-trans,octa-cis-undecaprenyl diphosphate + H2O = di-trans,octa-cis-undecaprenyl phosphate + phosphate + H(+). Functionally, catalyzes the dephosphorylation of undecaprenyl diphosphate (UPP). Confers resistance to bacitracin. In Staphylococcus aureus (strain MSSA476), this protein is Undecaprenyl-diphosphatase.